Reading from the N-terminus, the 252-residue chain is Phosphoglycolate phosphatase (252 aa).

The active-site Nucleophile is D13. Mg(2+) contacts are provided by D13, D15, and D192.

Belongs to the HAD-like hydrolase superfamily. CbbY/CbbZ/Gph/YieH family. As to quaternary structure, monomer. Requires Mg(2+) as cofactor. It depends on chloride as a cofactor.

The enzyme catalyses 2-phosphoglycolate + H2O = glycolate + phosphate. Its pathway is organic acid metabolism; glycolate biosynthesis; glycolate from 2-phosphoglycolate: step 1/1. Its function is as follows. Specifically catalyzes the dephosphorylation of 2-phosphoglycolate. Is involved in the dissimilation of the intracellular 2-phosphoglycolate formed during the DNA repair of 3'-phosphoglycolate ends, a major class of DNA lesions induced by oxidative stress. The polypeptide is Phosphoglycolate phosphatase (Shigella flexneri).